Here is a 305-residue protein sequence, read N- to C-terminus: Serine/threonine-protein phosphatase PP-X homolog 3 (305 aa).

Asp-53, His-55, Asp-81, and Asn-113 together coordinate Mn(2+). His-114 functions as the Proton donor in the catalytic mechanism. Mn(2+) is bound by residues His-163 and His-237.

This sequence belongs to the PPP phosphatase family. PP-4 (PP-X) subfamily. It depends on Mn(2+) as a cofactor.

The catalysed reaction is O-phospho-L-seryl-[protein] + H2O = L-seryl-[protein] + phosphate. It catalyses the reaction O-phospho-L-threonyl-[protein] + H2O = L-threonyl-[protein] + phosphate. This is Serine/threonine-protein phosphatase PP-X homolog 3 (Ppx3) from Paramecium tetraurelia.